Reading from the N-terminus, the 193-residue chain is Ion-translocating oxidoreductase complex subunit A (193 aa).

6 consecutive transmembrane segments (helical) span residues 5–25 (VLLL…FLGL), 39–59 (IGMS…SYLV), 63–83 (ILIP…VIAV), 102–122 (LLGI…VALL), 134–154 (AVYG…FAAL), and 171–191 (SIAL…TGLV).

This sequence belongs to the NqrDE/RnfAE family. As to quaternary structure, the complex is composed of six subunits: RnfA, RnfB, RnfC, RnfD, RnfE and RnfG.

It is found in the cell inner membrane. Its function is as follows. Part of a membrane-bound complex that couples electron transfer with translocation of ions across the membrane. The protein is Ion-translocating oxidoreductase complex subunit A of Pseudoalteromonas translucida (strain TAC 125).